The following is a 219-amino-acid chain: Cytidylate kinase (219 aa).

10–18 contributes to the ATP binding site; sequence GPAAAGKST.

This sequence belongs to the cytidylate kinase family. Type 1 subfamily.

The protein localises to the cytoplasm. The catalysed reaction is CMP + ATP = CDP + ADP. It catalyses the reaction dCMP + ATP = dCDP + ADP. This Staphylococcus saprophyticus subsp. saprophyticus (strain ATCC 15305 / DSM 20229 / NCIMB 8711 / NCTC 7292 / S-41) protein is Cytidylate kinase.